The primary structure comprises 560 residues: Glycolate permease GlcA (560 aa).

The Cytoplasmic portion of the chain corresponds to 1-13 (MVTWTQMYMPMGG). Residues 14 to 34 (LGLSALVALIPIIFFFVALAV) form a helical membrane-spanning segment. Residues 35–41 (LRLKGHV) are Periplasmic-facing. A helical membrane pass occupies residues 42–62 (AGAITLILSILIAIFAFKMPI). Residues 63 to 69 (DMAFAAA) are Cytoplasmic-facing. A helical membrane pass occupies residues 70 to 90 (GYGFIYGLWPIAWIIVAAVFL). The Periplasmic portion of the chain corresponds to 91 to 130 (YKLTVASGQFDIIRSSVISITDDQRLQVLLIGFSFGALLE). Residues 131–151 (GAAGFGAPVAITGALLVGLGF) form a helical membrane-spanning segment. Over 152 to 158 (KPLYAAG) the chain is Cytoplasmic. A helical transmembrane segment spans residues 159–179 (LCLIANTAPVAFGALGVPILV). The Periplasmic segment spans residues 180–199 (AGQVTGIDPFHIGAMAGRQL). A helical transmembrane segment spans residues 200–220 (PFLSVLVPFWLVAMMDGWKGV). The Cytoplasmic segment spans residues 221-225 (KETWP). A helical transmembrane segment spans residues 226–246 (AALVAGGSFAVTQFFTSNYIG). Over 247–248 (PE) the chain is Periplasmic. The chain crosses the membrane as a helical span at residues 249 to 269 (LPDITSALVSIVSLALFLKVW). The Cytoplasmic portion of the chain corresponds to 270–313 (RPKNTETAISMGQSAGAMVVNKPSSGGPVPSEYSLGQIIRAWSP). A helical transmembrane segment spans residues 314-334 (FLILTVLVTIWTMKPFKALFA). Over 335–378 (PGGAFYSLVINFQIPHLHQQVLKAAPIVAQPTPMDAVFKFDPLS) the chain is Periplasmic. The chain crosses the membrane as a helical span at residues 379-399 (AGGTAIFIAAIISIFILGVGI). Residues 400–408 (KKGIGVFAE) lie on the Cytoplasmic side of the membrane. A helical transmembrane segment spans residues 409–429 (TLISLKWPILSIGMVLAFAFV). Residues 430-438 (TNYSGMSTT) are Periplasmic-facing. The helical transmembrane segment at 439 to 459 (LALVLAGTGVMFPFFSPFLGW) threads the bilayer. Over 460 to 536 (LGVFLTGSDT…ELFRYTVKHS (77 aa)) the chain is Cytoplasmic. The helical transmembrane segment at 537-557 (LIFASVIGIITLLQAYVFTGM) threads the bilayer. Topologically, residues 558–560 (LVS) are periplasmic.

This sequence belongs to the lactate permease family.

The protein resides in the cell inner membrane. It carries out the reaction glycolate(in) + H(+)(in) = glycolate(out) + H(+)(out). The enzyme catalyses (S)-lactate(in) + H(+)(in) = (S)-lactate(out) + H(+)(out). It catalyses the reaction (R)-lactate(in) + H(+)(in) = (R)-lactate(out) + H(+)(out). Inhibited by the proton ionophore carbonyl cyanide m-chlorophenylhydrazone (CCCP). Uptake of glycolate across the membrane. Can also transport L-lactate and D-lactate. Seems to be driven by a proton motive force. In Escherichia coli (strain K12), this protein is Glycolate permease GlcA.